Reading from the N-terminus, the 352-residue chain is Holliday junction branch migration complex subunit RuvB (352 aa).

The tract at residues 4 to 185 (ADRLIAATGP…FGIVQRLEFY (182 aa)) is large ATPase domain (RuvB-L). ATP-binding positions include isoleucine 24, arginine 25, glycine 66, lysine 69, threonine 70, threonine 71, 132-134 (EDF), arginine 175, tyrosine 185, and arginine 222. Threonine 70 serves as a coordination point for Mg(2+). A small ATPAse domain (RuvB-S) region spans residues 186–256 (STADLATIVS…VADLALNLLD (71 aa)). The interval 259-352 (EHGFDHQDRR…VDEFLDAVDD (94 aa)) is head domain (RuvB-H). Arginine 295, arginine 314, and arginine 319 together coordinate DNA.

It belongs to the RuvB family. As to quaternary structure, homohexamer. Forms an RuvA(8)-RuvB(12)-Holliday junction (HJ) complex. HJ DNA is sandwiched between 2 RuvA tetramers; dsDNA enters through RuvA and exits via RuvB. An RuvB hexamer assembles on each DNA strand where it exits the tetramer. Each RuvB hexamer is contacted by two RuvA subunits (via domain III) on 2 adjacent RuvB subunits; this complex drives branch migration. In the full resolvosome a probable DNA-RuvA(4)-RuvB(12)-RuvC(2) complex forms which resolves the HJ.

The protein localises to the cytoplasm. The catalysed reaction is ATP + H2O = ADP + phosphate + H(+). Functionally, the RuvA-RuvB-RuvC complex processes Holliday junction (HJ) DNA during genetic recombination and DNA repair, while the RuvA-RuvB complex plays an important role in the rescue of blocked DNA replication forks via replication fork reversal (RFR). RuvA specifically binds to HJ cruciform DNA, conferring on it an open structure. The RuvB hexamer acts as an ATP-dependent pump, pulling dsDNA into and through the RuvAB complex. RuvB forms 2 homohexamers on either side of HJ DNA bound by 1 or 2 RuvA tetramers; 4 subunits per hexamer contact DNA at a time. Coordinated motions by a converter formed by DNA-disengaged RuvB subunits stimulates ATP hydrolysis and nucleotide exchange. Immobilization of the converter enables RuvB to convert the ATP-contained energy into a lever motion, pulling 2 nucleotides of DNA out of the RuvA tetramer per ATP hydrolyzed, thus driving DNA branch migration. The RuvB motors rotate together with the DNA substrate, which together with the progressing nucleotide cycle form the mechanistic basis for DNA recombination by continuous HJ branch migration. Branch migration allows RuvC to scan DNA until it finds its consensus sequence, where it cleaves and resolves cruciform DNA. The protein is Holliday junction branch migration complex subunit RuvB of Pseudomonas fluorescens (strain SBW25).